The chain runs to 299 residues: Protein translocase subunit SecF (299 aa).

The next 6 helical transmembrane spans lie at 14–34 (VLIV…FYHG), 142–162 (IFLV…RFKL), 166–186 (IASI…LGVF), 193–213 (YIIV…IIIF), 245–265 (LTSV…EGSI), and 270–290 (LVFM…ASPI).

It belongs to the SecD/SecF family. SecF subfamily. In terms of assembly, forms a complex with SecD. Part of the essential Sec protein translocation apparatus which comprises SecA, SecYEG and auxiliary proteins SecDF. Other proteins may also be involved.

The protein resides in the cell inner membrane. In terms of biological role, part of the Sec protein translocase complex. Interacts with the SecYEG preprotein conducting channel. SecDF uses the proton motive force (PMF) to complete protein translocation after the ATP-dependent function of SecA. This is Protein translocase subunit SecF from Borreliella burgdorferi (strain ATCC 35210 / DSM 4680 / CIP 102532 / B31) (Borrelia burgdorferi).